Reading from the N-terminus, the 122-residue chain is Ribosome-binding factor A (122 aa).

Belongs to the RbfA family. As to quaternary structure, monomer. Binds 30S ribosomal subunits, but not 50S ribosomal subunits or 70S ribosomes.

It is found in the cytoplasm. Functionally, one of several proteins that assist in the late maturation steps of the functional core of the 30S ribosomal subunit. Associates with free 30S ribosomal subunits (but not with 30S subunits that are part of 70S ribosomes or polysomes). Required for efficient processing of 16S rRNA. May interact with the 5'-terminal helix region of 16S rRNA. This is Ribosome-binding factor A from Prosthecochloris aestuarii (strain DSM 271 / SK 413).